The primary structure comprises 156 residues: Small ribosomal subunit protein uS7 (156 aa).

It belongs to the universal ribosomal protein uS7 family. In terms of assembly, part of the 30S ribosomal subunit. Contacts proteins S9 and S11.

Functionally, one of the primary rRNA binding proteins, it binds directly to 16S rRNA where it nucleates assembly of the head domain of the 30S subunit. Is located at the subunit interface close to the decoding center, probably blocks exit of the E-site tRNA. In Chelativorans sp. (strain BNC1), this protein is Small ribosomal subunit protein uS7.